Here is a 298-residue protein sequence, read N- to C-terminus: MLEKSLATLFALLILATLINRFLLWRLPERKGGEVTLRIRTWWGIVICFSMVISGPRWMTLTFFALISFLALKEYCTLISVHFPRWLYWGIPLNYLLIGFNCFELFLLFIPLAGFLILATGQVLVGDPSGFLHTVSAIFWGWIMTVFALSHAAWLLMLPTTNIQGGALLVLFLLALTESNDIAQYLWGKSCGRRKVVPKVSPGKTLEGLMGGVITIMIASLIIGPLLTPLNTLQALLAGLLIGISGFCGDVVMSAIKRDIGVKDSGKLLPGHGGLLDRIDSLIFTAPVFFYFIRYCCY.

The next 8 membrane-spanning stretches (helical) occupy residues 5 to 25 (SLAT…FLLW), 52 to 72 (VISG…FLAL), 105 to 125 (LFLL…QVLV), 138 to 158 (IFWG…LLML), 163 to 183 (IQGG…NDIA), 208 to 228 (GLMG…PLLT), 236 to 256 (LLAG…MSAI), and 273 to 293 (GGLL…FYFI).

It belongs to the CDS family.

It is found in the cell membrane. This is an uncharacterized protein from Escherichia coli (strain K12).